The primary structure comprises 271 residues: Formamidopyrimidine-DNA glycosylase (271 aa).

The active-site Schiff-base intermediate with DNA is proline 2. Glutamate 3 (proton donor) is an active-site residue. The Proton donor; for beta-elimination activity role is filled by lysine 56. DNA-binding residues include histidine 89, arginine 107, and lysine 151. The FPG-type zinc finger occupies 236–270; sequence NVYGRAGLPCRQCGTPVRLLRQGQRSTYFCPHCQR. Arginine 260 functions as the Proton donor; for delta-elimination activity in the catalytic mechanism.

Belongs to the FPG family. In terms of assembly, monomer. It depends on Zn(2+) as a cofactor.

The enzyme catalyses Hydrolysis of DNA containing ring-opened 7-methylguanine residues, releasing 2,6-diamino-4-hydroxy-5-(N-methyl)formamidopyrimidine.. The catalysed reaction is 2'-deoxyribonucleotide-(2'-deoxyribose 5'-phosphate)-2'-deoxyribonucleotide-DNA = a 3'-end 2'-deoxyribonucleotide-(2,3-dehydro-2,3-deoxyribose 5'-phosphate)-DNA + a 5'-end 5'-phospho-2'-deoxyribonucleoside-DNA + H(+). In terms of biological role, involved in base excision repair of DNA damaged by oxidation or by mutagenic agents. Acts as a DNA glycosylase that recognizes and removes damaged bases. Has a preference for oxidized purines, such as 7,8-dihydro-8-oxoguanine (8-oxoG). Has AP (apurinic/apyrimidinic) lyase activity and introduces nicks in the DNA strand. Cleaves the DNA backbone by beta-delta elimination to generate a single-strand break at the site of the removed base with both 3'- and 5'-phosphates. The sequence is that of Formamidopyrimidine-DNA glycosylase from Acidovorax sp. (strain JS42).